A 132-amino-acid chain; its full sequence is Replication enhancer protein (132 aa).

This sequence belongs to the geminiviridae replication enhancer protein family. In terms of assembly, homooligomer. Interacts with the replication-associated protein (REP). Interacts with host proliferating cell nuclear antigen (PCNA). Interacts with host retinoblastoma-related protein 1 (RBR1), and may thereby deregulate the host cell cycle. Oligomerization and interaction with PCNA are necessary for optimal replication enhancement.

Its function is as follows. Increases viral DNA accumulation. Enhances infectivity and symptom expression. This chain is Replication enhancer protein, found in Cabbage leaf curl virus (isolate Jamaica) (CaLCuV).